Reading from the N-terminus, the 218-residue chain is MGQKVHPIGMRVGIIRDWDAKWYAEKEYAEFLHEDLRIRKFIATKLADAAVSTIEIERAANRVNISIHTAKPGMVIGKGGSEVENLRKELNKLTGKRVHINIVEIKKPDLDAKLVGEGIARQLENRVAFRRAQKQAIQRAMRAGAKGIKTQVSGRLNGADIARSEGYSEGTVPLHTLRADIDYAWEEADTTYGKLGVKVWIYRGEILPTKKNTEKGGK.

A KH type-2 domain is found at 38 to 106; it reads IRKFIATKLA…RVHINIVEIK (69 aa).

Belongs to the universal ribosomal protein uS3 family. Part of the 30S ribosomal subunit. Forms a tight complex with proteins S10 and S14.

Binds the lower part of the 30S subunit head. Binds mRNA in the 70S ribosome, positioning it for translation. The protein is Small ribosomal subunit protein uS3 of Enterococcus faecalis (strain ATCC 700802 / V583).